The sequence spans 1266 residues: Kinesin-like protein KIN-12G (1266 aa).

The segment at 1–22 (MPSDCGDDDHGGGSAPAGFELQ) is disordered. The Kinesin motor domain occupies 32-369 (NVQVVIRVRP…LKFAQRAKYI (338 aa)). 113–120 (GQTGSGKT) provides a ligand contact to ATP. Coiled-coil stretches lie at residues 613 to 668 (MEFI…SEAV), 817 to 854 (RSEL…FKRK), 1029 to 1060 (ARES…AERV), and 1084 to 1120 (SELL…MNRH).

This sequence belongs to the TRAFAC class myosin-kinesin ATPase superfamily. Kinesin family. KIN-12 subfamily.

This is Kinesin-like protein KIN-12G from Oryza sativa subsp. japonica (Rice).